Consider the following 704-residue polypeptide: Histone-lysine N-methyltransferase, H3 lysine-9 specific SUVH1 (704 aa).

Disordered stretches follow at residues 1 to 21 (MEQG…TRVL) and 68 to 176 (PFVA…QAEG). 2 stretches are compositionally biased toward polar residues: residues 80 to 90 (ESSQQTPSGVP) and 109 to 121 (SFRT…GNSG). The segment covering 159-170 (GKKRGRPKKPRR) has biased composition (basic residues). The 148-residue stretch at 265–412 (GNAPGIEVGD…CNVFKYKLLR (148 aa)) folds into the YDG domain. Positions 487–548 (PSCHCVGGCQ…NCRNRMSQGG (62 aa)) constitute a Pre-SET domain. Cys489, Cys491, Cys495, Cys502, Cys504, Cys530, Cys534, Cys536, and Cys540 together coordinate Zn(2+). An SET domain is found at 551–681 (ARLEVFKTKN…PMQELTFDYG (131 aa)). S-adenosyl-L-methionine is bound by residues 561–563 (RGW), Asp593, Tyr595, Arg635, and 638–639 (NH). Zn(2+) is bound by residues Cys641, Cys692, Cys694, and Cys699. Residues 688–704 (RRKKCLCGSLNCRGYFY) form the Post-SET domain.

This sequence belongs to the class V-like SAM-binding methyltransferase superfamily. Histone-lysine methyltransferase family. Suvar3-9 subfamily. In terms of assembly, interacts with LHP1. As to expression, expressed in roots, stems, leaves and flowers.

The protein localises to the nucleus. It is found in the chromosome. The enzyme catalyses N(6)-methyl-L-lysyl(27)-[histone H3] + S-adenosyl-L-methionine = N(6),N(6)-dimethyl-L-lysyl(27)-[histone H3] + S-adenosyl-L-homocysteine + H(+). It catalyses the reaction L-lysyl(9)-[histone H3] + 2 S-adenosyl-L-methionine = N(6),N(6)-dimethyl-L-lysyl(9)-[histone H3] + 2 S-adenosyl-L-homocysteine + 2 H(+). The catalysed reaction is L-lysyl(27)-[histone H3] + S-adenosyl-L-methionine = N(6)-methyl-L-lysyl(27)-[histone H3] + S-adenosyl-L-homocysteine + H(+). Functionally, histone methyltransferase. Methylates in vitro both 'Lys-9' and 'Lys-27' of histone H3. Required for in vivo dimethylation of 'Lys-9'. H3 'Lys-9' methylation represents a specific tag for epigenetic control for plant development and transcriptional repression. In Nicotiana tabacum (Common tobacco), this protein is Histone-lysine N-methyltransferase, H3 lysine-9 specific SUVH1 (SUVH1).